The chain runs to 135 residues: Small ribosomal subunit protein uS12 (135 aa).

Positions 1 to 29 (MPTINQLVRKGREKVEKKSKAPALQGNPQ) are disordered. Position 89 is a 3-methylthioaspartic acid (Asp89). The disordered stretch occupies residues 106-135 (GVKDRKQSRSKYGAKRPKPGQAAATTGKKK). Over residues 113-123 (SRSKYGAKRPK) the composition is skewed to basic residues.

Belongs to the universal ribosomal protein uS12 family. As to quaternary structure, part of the 30S ribosomal subunit. Contacts proteins S8 and S17. May interact with IF1 in the 30S initiation complex.

In terms of biological role, with S4 and S5 plays an important role in translational accuracy. Functionally, interacts with and stabilizes bases of the 16S rRNA that are involved in tRNA selection in the A site and with the mRNA backbone. Located at the interface of the 30S and 50S subunits, it traverses the body of the 30S subunit contacting proteins on the other side and probably holding the rRNA structure together. The combined cluster of proteins S8, S12 and S17 appears to hold together the shoulder and platform of the 30S subunit. This Sulfurihydrogenibium sp. (strain YO3AOP1) protein is Small ribosomal subunit protein uS12.